The following is a 251-amino-acid chain: Small ribosomal subunit protein uS3 (251 aa).

The KH type-2 domain occupies 39–111 (IRELINNFSK…DVDLNILEVK (73 aa)).

It belongs to the universal ribosomal protein uS3 family. As to quaternary structure, part of the 30S ribosomal subunit. Forms a tight complex with proteins S10 and S14.

Binds the lower part of the 30S subunit head. Binds mRNA in the 70S ribosome, positioning it for translation. The polypeptide is Small ribosomal subunit protein uS3 (Phytoplasma sp. (strain STRAWB1)).